The sequence spans 153 residues: uncharacterized protein (153 aa).

Positions 1–22 (MKMLKKGTAVLFVMIMAVMLVA) are cleaved as a signal peptide. Residue Cys23 is the site of N-palmitoyl cysteine attachment. Cys23 is lipidated: S-diacylglycerol cysteine. Residues 117–153 (DMNKIPGMSSNGDTSKGISMEESAKMLESQGYKEVSK) are disordered. Over residues 124–133 (MSSNGDTSKG) the composition is skewed to polar residues.

To E.coli YehR.

It is found in the cell membrane. This is an uncharacterized protein from Listeria monocytogenes serovar 1/2a (strain ATCC BAA-679 / EGD-e).